Reading from the N-terminus, the 117-residue chain is Putative membrane protein insertion efficiency factor (117 aa).

It belongs to the UPF0161 family.

Its subcellular location is the cell inner membrane. Functionally, could be involved in insertion of integral membrane proteins into the membrane. The sequence is that of Putative membrane protein insertion efficiency factor from Bartonella henselae (strain ATCC 49882 / DSM 28221 / CCUG 30454 / Houston 1) (Rochalimaea henselae).